A 540-amino-acid chain; its full sequence is Upstream-binding protein 1 (540 aa).

S22 carries the phosphoserine modification. One can recognise a Grh/CP2 DB domain in the interval 60-296; sequence EHPPFQYVMC…EQKKSSKRTL (237 aa). Disordered regions lie at residues 236-270 and 285-368; these read KPKG…DTTI and EHEQ…QPSA. Positions 238 to 262 are enriched in basic and acidic residues; sequence KGADRKQKTDREKMEKRTAHEKEKY. Positions 320-368 are enriched in polar residues; it reads YVNNSPSPAPTFTSPQQSTCSVPDSNSSSPNHQGDGASQTSGEQIQPSA. Phosphoserine is present on residues S390 and S393.

It belongs to the grh/CP2 family. CP2 subfamily. Interacts with TFCP2. Interacts with PIAS1, and is probably part of a complex containing TFCP2, UBP1 and PIAS1. In terms of tissue distribution, expressed in adrenal tissue, JEG-3, NCI-H295A, Hep-G2 and HeLa cell lines.

It localises to the nucleus. In terms of biological role, functions as a transcriptional activator in a promoter context-dependent manner. Modulates the placental expression of CYP11A1. Involved in regulation of the alpha-globin gene in erythroid cells. Activation of the alpha-globin promoter in erythroid cells is via synergistic interaction with TFCP2. Involved in regulation of the alpha-globin gene in erythroid cells. Binds strongly to sequences around the HIV-1 initiation site and weakly over the TATA-box. Represses HIV-1 transcription by inhibiting the binding of TFIID to the TATA-box. This Homo sapiens (Human) protein is Upstream-binding protein 1 (UBP1).